The chain runs to 132 residues: NADPH-dependent 7-cyano-7-deazaguanine reductase (132 aa).

The Thioimide intermediate role is filled by cysteine 43. Aspartate 50 serves as the catalytic Proton donor. Substrate-binding positions include 65 to 67 and 84 to 85; these read VEL and HE.

The protein belongs to the GTP cyclohydrolase I family. QueF type 1 subfamily.

The protein resides in the cytoplasm. It carries out the reaction 7-aminomethyl-7-carbaguanine + 2 NADP(+) = 7-cyano-7-deazaguanine + 2 NADPH + 3 H(+). Its pathway is tRNA modification; tRNA-queuosine biosynthesis. Functionally, catalyzes the NADPH-dependent reduction of 7-cyano-7-deazaguanine (preQ0) to 7-aminomethyl-7-deazaguanine (preQ1). This Thermosynechococcus vestitus (strain NIES-2133 / IAM M-273 / BP-1) protein is NADPH-dependent 7-cyano-7-deazaguanine reductase.